Consider the following 489-residue polypeptide: Anthranilate synthase component 1 1 (489 aa).

262–264 (PYS) provides a ligand contact to L-tryptophan. The interval 288–309 (DRIETEPIAGTRPRGETPDADD) is disordered. 297–298 (GT) contributes to the chorismate binding site. Over residues 300–309 (PRGETPDADD) the composition is skewed to basic and acidic residues. Glu-324 contacts Mg(2+). Chorismate contacts are provided by residues Tyr-412, Arg-432, 446-448 (GAG), and Gly-448. Glu-461 lines the Mg(2+) pocket.

This sequence belongs to the anthranilate synthase component I family. As to quaternary structure, tetramer of two components I and two components II. Mg(2+) is required as a cofactor.

It catalyses the reaction chorismate + L-glutamine = anthranilate + pyruvate + L-glutamate + H(+). It functions in the pathway amino-acid biosynthesis; L-tryptophan biosynthesis; L-tryptophan from chorismate: step 1/5. This chain is Anthranilate synthase component 1 1 (trpE1), found in Haloarcula marismortui (strain ATCC 43049 / DSM 3752 / JCM 8966 / VKM B-1809) (Halobacterium marismortui).